The sequence spans 557 residues: 2,3-bisphosphoglycerate-independent phosphoglycerate mutase 1 (557 aa).

Mn(2+) contacts are provided by Asp-27 and Ser-80. The Phosphoserine intermediate role is filled by Ser-80. Substrate is bound by residues His-139, Arg-169–Asp-170, Arg-205, Arg-212, Arg-285–Arg-288, and Lys-360. Positions 429, 433, 470, 471, and 500 each coordinate Mn(2+).

This sequence belongs to the BPG-independent phosphoglycerate mutase family. In terms of assembly, monomer. Mn(2+) serves as cofactor.

Its subcellular location is the cytoplasm. It catalyses the reaction (2R)-2-phosphoglycerate = (2R)-3-phosphoglycerate. The protein operates within carbohydrate degradation; glycolysis; pyruvate from D-glyceraldehyde 3-phosphate: step 3/5. In terms of biological role, catalyzes the interconversion of 2-phosphoglycerate (2-PGA) and 3-phosphoglycerate (3-PGA). Required for guard cell function (e.g. blue light-, abscisic acid- (ABA), and low CO(2)-regulated stomatal movements) and fertility (e.g. pollen grains production). This is 2,3-bisphosphoglycerate-independent phosphoglycerate mutase 1 (PGM1) from Arabidopsis thaliana (Mouse-ear cress).